The sequence spans 86 residues: Polcalcin Che a 3 (86 aa).

EF-hand domains are found at residues Gln-8 to Val-43 and Val-43 to Leu-78. 9 residues coordinate Ca(2+): Asp-21, Asn-23, Asp-25, Lys-27, Glu-32, Asp-56, Asp-58, Asp-60, and Glu-67.

The polypeptide is Polcalcin Che a 3 (Chenopodium album (Fat hen)).